A 264-amino-acid polypeptide reads, in one-letter code: MARDITFLTVFLESCGAVNNDEAGKLLSAWTSTVRIEGPESTDSNSLYIPLLPPGMLKIKLNFKMNDRLVTEEQELFTKLREIVGSSIRFWEEQLFYQVQDVSTIENHVILSLKCTILTDAQISTFISKPRELHTHAKGYPEIYYLSELSTTVNFFSKEGNYVEISQVIPHFNEYFSSLIVSQLEFEYPMVFSMISRLRLKWQQSSLAPISYALTSNSVLLPIMLNMIAQDKSSTTAYQILCRRRGPPIQNFQIFSLPAVTYNK.

Belongs to the TOP6B-like family. As to quaternary structure, interacts with REC104; seems to form a functional unit with REC104. REC102-REC104 interacts with SKI8-SPO11 and this interaction is required for proper subcellular location of the proteins during the initiation of recombination. Interacts with MEI4, REC114 and SPO11.

The protein localises to the nucleus. Required for formation of the SPO11-mediated double-strand breaks (DSBs) that initiate meiotic recombination. May mediate the interaction between SPO11 subunits during meiosis. Also needed for homolog chromosome pairing, synaptonemal complex formation, and for the proper timing of the first meiotic division. Not required for mitosis and mitotic DNA repair mechanisms. This is Meiotic recombination protein REC102 from Saccharomyces cerevisiae (strain ATCC 204508 / S288c) (Baker's yeast).